Consider the following 495-residue polypeptide: Neuronal acetylcholine receptor subunit beta-4 (495 aa).

Residues 1–20 form the signal peptide; sequence MRGTPLLLVSLFALLQPGDC. Residues 21 to 235 lie on the Extracellular side of the membrane; sequence RLANAEEKLM…IIKRKPLFYT (215 aa). Residues Asn-35, Asn-92, Asn-137, and Asn-165 are each glycosylated (N-linked (GlcNAc...) asparagine). An intrachain disulfide couples Cys-152 to Cys-166. A helical membrane pass occupies residues 236 to 256; sequence INLIIPCVLITSLAILVFYLP. Residues 257 to 264 are Cytoplasmic-facing; that stretch reads SDCGEKMT. Na(+) is bound at residue Glu-261. A helical transmembrane segment spans residues 265–285; that stretch reads LCISVLLALTFFLLLISKIVP. At 286 to 297 the chain is on the extracellular side; that stretch reads PTSLDIPLIGKY. Residues 298–318 traverse the membrane as a helical segment; sequence LLFTMVLVTFSIVTTVCVLNV. Over 319-463 the chain is Cytoplasmic; sequence HHRSPSTHTM…WKFVAMVVDR (145 aa). The helical transmembrane segment at 464–484 threads the bilayer; the sequence is LFLWVFVIVCILGTMGLFLPP. The Extracellular segment spans residues 485 to 495; that stretch reads LFQIHAPSKGL.

Belongs to the ligand-gated ion channel (TC 1.A.9) family. Acetylcholine receptor (TC 1.A.9.1) subfamily. Beta-4/CHRNB4 sub-subfamily. Neuronal AChR is composed of two different types of subunits: alpha and beta. CHRNB4/Beta-4 subunit can be combined to CHRNA2/alpha-2, CHRNA3/alpha-3 or CHRNA4/alpha-4, CHRNA5/alpha-5 and CHRNB3/beta-3 to give rise to functional receptors. Forms stoichiometries such as (CHRNA3)2:(CHRNB4)3 or (CHRNA3:CHRNB4)2:CHRNB3. Interacts with RIC3; which is required for proper folding and assembly. Interacts with LYPD6. Predominantly expressed by immature T-cells in the thymus.

The protein localises to the synaptic cell membrane. It is found in the cell membrane. The catalysed reaction is K(+)(in) = K(+)(out). The enzyme catalyses Na(+)(in) = Na(+)(out). It carries out the reaction Ca(2+)(in) = Ca(2+)(out). With respect to regulation, activated by a myriad of ligands such as acetylcholine, cytisine, nicotine, choline and epibatidine. The heteropentamer CHRNA3:CHRNB4 activity is blocked by the alpha-conotoxin ImI and AuIB. Its function is as follows. Component of neuronal acetylcholine receptors (nAChRs) that function as pentameric, ligand-gated cation channels with high calcium permeability among other activities. nAChRs are excitatory neurotrasnmitter receptors formed by a collection of nAChR subunits known to mediate synaptic transmission in the nervous system and the neuromuscular junction. Each nAchR subunit confers differential attributes to channel properties, including activation, deactivation and desensitization kinetics, pH sensitivity, cation permeability, and binding to allosteric modulators. CHRNB4 forms heteropentameric neuronal acetylcholine receptors with CHRNA2, CHRNA3 and CHRNA4, as well as CHRNA5 and CHRNB3 as accesory subunits. CHRNA3:CHRNB4 being predominant in neurons of the autonomic ganglia, it is known as ganglionic nicotinic receptor. CHRNA3:CHRNB4 or CHRNA3:CHRNA5:CHRNB4 play also an important role in the habenulo-interpeduncular tract, modulating the mesolimbic dopamine system and affecting reward circuits and addiction. Hypothalamic CHRNA3:CHRNB4 nAChR activation by nicotine leads to activation of POMC neurons and a decrease in food intake. This chain is Neuronal acetylcholine receptor subunit beta-4 (Chrnb4), found in Mus musculus (Mouse).